The chain runs to 940 residues: Isoleucine--tRNA ligase (940 aa).

The short motif at 58–68 is the 'HIGH' region element; sequence PYANGSIHIGH. Glu564 is an L-isoleucyl-5'-AMP binding site. Positions 605-609 match the 'KMSKS' region motif; that stretch reads KMSKS. Lys608 lines the ATP pocket. Residues Cys903, Cys906, Cys923, and Cys926 each coordinate Zn(2+).

Belongs to the class-I aminoacyl-tRNA synthetase family. IleS type 1 subfamily. As to quaternary structure, monomer. Zn(2+) serves as cofactor.

It is found in the cytoplasm. The enzyme catalyses tRNA(Ile) + L-isoleucine + ATP = L-isoleucyl-tRNA(Ile) + AMP + diphosphate. Its function is as follows. Catalyzes the attachment of isoleucine to tRNA(Ile). As IleRS can inadvertently accommodate and process structurally similar amino acids such as valine, to avoid such errors it has two additional distinct tRNA(Ile)-dependent editing activities. One activity is designated as 'pretransfer' editing and involves the hydrolysis of activated Val-AMP. The other activity is designated 'posttransfer' editing and involves deacylation of mischarged Val-tRNA(Ile). This Shewanella putrefaciens (strain CN-32 / ATCC BAA-453) protein is Isoleucine--tRNA ligase.